Consider the following 774-residue polypeptide: Polyribonucleotide nucleotidyltransferase (774 aa).

2 residues coordinate Mg(2+): Asp485 and Asp491. The KH domain maps to 552-611 (PRIETMSVPKDKIRDIIGTGGKIIREIVATTGAKVDIDDDGTVKISSSDTAQIEAARNWI). An S1 motif domain is found at 621–689 (GKIYTGKVVN…NRGKVRLSMR (69 aa)). The segment at 689-774 (RVVDQETGEE…APAFLTRDDD (86 aa)) is disordered. Residues 700 to 755 (PDTRPPREERPRGDRGDRGDRGPRRDGDRRREGGDRGPRRDRGDRGDRPRRERSEG) show a composition bias toward basic and acidic residues.

Belongs to the polyribonucleotide nucleotidyltransferase family. It depends on Mg(2+) as a cofactor.

The protein resides in the cytoplasm. It catalyses the reaction RNA(n+1) + phosphate = RNA(n) + a ribonucleoside 5'-diphosphate. Functionally, involved in mRNA degradation. Catalyzes the phosphorolysis of single-stranded polyribonucleotides processively in the 3'- to 5'-direction. This Rhizorhabdus wittichii (strain DSM 6014 / CCUG 31198 / JCM 15750 / NBRC 105917 / EY 4224 / RW1) (Sphingomonas wittichii) protein is Polyribonucleotide nucleotidyltransferase.